The primary structure comprises 983 residues: Isoleucine--tRNA ligase (983 aa).

A 'HIGH' region motif is present at residues 61–71; the sequence is PYANGELHVGH. Glu608 contacts L-isoleucyl-5'-AMP. Residues 649–653 carry the 'KMSKS' region motif; sequence KMSKS. Lys652 is an ATP binding site. Zn(2+) is bound by residues Cys952, Cys955, Cys972, and Cys975.

It belongs to the class-I aminoacyl-tRNA synthetase family. IleS type 1 subfamily. Monomer. The cofactor is Zn(2+).

The protein localises to the cytoplasm. The enzyme catalyses tRNA(Ile) + L-isoleucine + ATP = L-isoleucyl-tRNA(Ile) + AMP + diphosphate. In terms of biological role, catalyzes the attachment of isoleucine to tRNA(Ile). As IleRS can inadvertently accommodate and process structurally similar amino acids such as valine, to avoid such errors it has two additional distinct tRNA(Ile)-dependent editing activities. One activity is designated as 'pretransfer' editing and involves the hydrolysis of activated Val-AMP. The other activity is designated 'posttransfer' editing and involves deacylation of mischarged Val-tRNA(Ile). The sequence is that of Isoleucine--tRNA ligase from Gloeobacter violaceus (strain ATCC 29082 / PCC 7421).